The chain runs to 317 residues: Cytochrome f (317 aa).

The first 34 residues, 1–34 (MINFKKQIMKKTTFFLCAMLLVSSILIAPRSSLA), serve as a signal peptide directing secretion. Positions 35, 55, 58, and 59 each coordinate heme. The chain crosses the membrane as a helical span at residues 284–304 (IIGLIAFFIGVGLTQILLVLK).

It belongs to the cytochrome f family. In terms of assembly, the 4 large subunits of the cytochrome b6-f complex are cytochrome b6, subunit IV (17 kDa polypeptide, PetD), cytochrome f and the Rieske protein, while the 4 small subunits are PetG, PetL, PetM and PetN. The complex functions as a dimer. It depends on heme as a cofactor.

Its subcellular location is the cellular thylakoid membrane. Component of the cytochrome b6-f complex, which mediates electron transfer between photosystem II (PSII) and photosystem I (PSI), cyclic electron flow around PSI, and state transitions. The polypeptide is Cytochrome f (Prochlorococcus marinus (strain MIT 9515)).